Reading from the N-terminus, the 402-residue chain is Tyrosine--tRNA ligase (402 aa).

A 'HIGH' region motif is present at residues Pro-48–His-57. Residues Lys-235–Ser-239 carry the 'KMSKS' region motif. Lys-238 is a binding site for ATP. One can recognise an S4 RNA-binding domain in the interval Ala-338–Leu-402.

This sequence belongs to the class-I aminoacyl-tRNA synthetase family. TyrS type 2 subfamily. In terms of assembly, homodimer.

The protein resides in the cytoplasm. It catalyses the reaction tRNA(Tyr) + L-tyrosine + ATP = L-tyrosyl-tRNA(Tyr) + AMP + diphosphate + H(+). Functionally, catalyzes the attachment of tyrosine to tRNA(Tyr) in a two-step reaction: tyrosine is first activated by ATP to form Tyr-AMP and then transferred to the acceptor end of tRNA(Tyr). The sequence is that of Tyrosine--tRNA ligase from Synechococcus elongatus (strain ATCC 33912 / PCC 7942 / FACHB-805) (Anacystis nidulans R2).